Reading from the N-terminus, the 706-residue chain is K(+)-insensitive pyrophosphate-energized proton pump (706 aa).

Helical transmembrane passes span 1 to 21 (MTAL…AIWA), 62 to 82 (IVIF…GFAI), 83 to 103 (GAIL…RANV), 128 to 148 (GMLV…FLVY), and 164 to 184 (VALG…GGIF). Lysine 186 serves as a coordination point for substrate. 4 residues coordinate Mg(2+): aspartate 189, aspartate 193, asparagine 216, and aspartate 219. 6 helical membrane passes run 231–251 (LFET…IFFA), 261–281 (TLPL…TFFV), 298–318 (IATG…LIGF), 328–348 (GMSL…IIWI), 376–398 (IQGL…AGIL), and 412–432 (ATAT…FGPV). Aspartate 434 contributes to the Mg(2+) binding site. 4 helical membrane passes run 465–485 (AVTK…LFAA), 516–536 (YVVV…AMGM), 585–605 (IIPS…IYAI), and 616–636 (AFSA…FVAI). Ca(2+) contacts are provided by aspartate 646, aspartate 672, and aspartate 676. Residue lysine 679 coordinates substrate. The chain crosses the membrane as a helical span at residues 685–705 (AVNPMIKITNIVALLLLAILA).

It belongs to the H(+)-translocating pyrophosphatase (TC 3.A.10) family. K(+)-insensitive subfamily. As to quaternary structure, homodimer. It depends on Mg(2+) as a cofactor.

It localises to the cell inner membrane. The enzyme catalyses diphosphate + H2O + H(+)(in) = 2 phosphate + 2 H(+)(out). Its function is as follows. Proton pump that utilizes the energy of pyrophosphate hydrolysis as the driving force for proton movement across the membrane. Generates a proton motive force. The polypeptide is K(+)-insensitive pyrophosphate-energized proton pump (Bradyrhizobium diazoefficiens (strain JCM 10833 / BCRC 13528 / IAM 13628 / NBRC 14792 / USDA 110)).